Here is a 418-residue protein sequence, read N- to C-terminus: Putative F-box protein At3g23950 (418 aa).

The F-box domain maps to 1–42; the sequence is MNIPPELTFEVLVRLPLKSLARFRSMCKEWKLVIDSEFFRDC.

The chain is Putative F-box protein At3g23950 from Arabidopsis thaliana (Mouse-ear cress).